Consider the following 611-residue polypeptide: tRNA uridine 5-carboxymethylaminomethyl modification enzyme MnmG (611 aa).

FAD-binding positions include 8–13 (GAGHAG), V120, and S175. 268-282 (GPRYCPSIEDKIVRF) is an NAD(+) binding site. Residue Q365 coordinates FAD.

The protein belongs to the MnmG family. Homodimer. Heterotetramer of two MnmE and two MnmG subunits. FAD serves as cofactor.

It is found in the cytoplasm. Its function is as follows. NAD-binding protein involved in the addition of a carboxymethylaminomethyl (cmnm) group at the wobble position (U34) of certain tRNAs, forming tRNA-cmnm(5)s(2)U34. This is tRNA uridine 5-carboxymethylaminomethyl modification enzyme MnmG from Mycoplasmoides gallisepticum (strain R(low / passage 15 / clone 2)) (Mycoplasma gallisepticum).